The chain runs to 207 residues: Ras-related protein rab7 (207 aa).

Residues 15 to 22, 34 to 40, 63 to 67, 125 to 128, and 156 to 157 each bind GTP; these read GDSGVGKT, SNQYKAT, DTAGQ, NKID, and AK. An Effector region motif is present at residues 37–45; sequence YKATIGADF. 2 S-geranylgeranyl cysteine lipidation sites follow: cysteine 205 and cysteine 207. Cysteine 207 carries the cysteine methyl ester modification.

It belongs to the small GTPase superfamily. Rab family. As to quaternary structure, (Microbial infection) Interacts with Singapore grouper iridoviral proteins VP69 (ORF69) and VP101 (ORF101). As to expression, ubiquitously expressed. Expressed in liver, spleen, kidney, brain, intestine, heart, skin, muscle, gill and stomach.

Its subcellular location is the late endosome membrane. It localises to the lysosome membrane. Its function is as follows. Key regulator in endo-lysosomal trafficking. Governs early-to-late endosomal maturation, microtubule minus-end as well as plus-end directed endosomal migration and positioning, and endosome-lysosome transport through different protein-protein interaction cascades. Plays important roles in microbial pathogen infection and survival, as well as in participating in the life cycle of viruses. This is Ras-related protein rab7 from Epinephelus coioides (Orange-spotted grouper).